The chain runs to 551 residues: High-affinity glucose transporter (551 aa).

Over 1 to 27 the chain is Cytoplasmic; the sequence is MSLKNWLLLRDIQYEGTFYKKFPHVYN. The chain crosses the membrane as a helical span at residues 28–48; sequence IYVIGFIACISGLMFGFDIAS. Topologically, residues 49–70 are extracellular; sequence MSSMIGTDVYKDYFSNPDSLTY. Residues 71-91 form a helical membrane-spanning segment; that stretch reads GGITASMAGGSFLGSLISPNF. Residues 92 to 98 are Cytoplasmic-facing; that stretch reads SDAFGRK. Residues 99–119 traverse the membrane as a helical segment; it reads VSLHICAALWIIGAILQCAAQ. The Extracellular segment spans residues 120-123; that stretch reads DQAM. The chain crosses the membrane as a helical span at residues 124–144; the sequence is LIVGRVISGMGIGFGSSAAPV. Over 145 to 155 the chain is Cytoplasmic; that stretch reads YCSEISPPKIR. Residues 156–176 traverse the membrane as a helical segment; sequence GTISGLFQFSVTVGIMVLFYI. The Extracellular segment spans residues 177–190; it reads GYGCHFIDGAAAFR. Residues 191–211 traverse the membrane as a helical segment; the sequence is ITWGLQMVPGLILMVGVFFIP. The Cytoplasmic segment spans residues 212-289; sequence ESPRWLANHD…VGVSAQMWQQ (78 aa). Residues 290–310 traverse the membrane as a helical segment; the sequence is LCGMNVMMYYIVYIFNMAGYT. The Extracellular portion of the chain corresponds to 311–315; it reads GNTNL. Residues 316–336 traverse the membrane as a helical segment; sequence VASSIQYVLNVVMTIPALFLI. At 337 to 343 the chain is on the cytoplasmic side; sequence DKFGRRP. Residues 344–364 traverse the membrane as a helical segment; the sequence is VLIIGGIFMFTWLFSVAGILA. Residues 365-395 are Extracellular-facing; it reads TYSVPAPGGVNGDDTVTIQIPSENTSAANGV. N-linked (GlcNAc...) asparagine glycosylation is present at Asn388. Residues 396 to 416 form a helical membrane-spanning segment; the sequence is IASSYLFVCFFAPTWGIGIWI. Residues 417-432 lie on the Cytoplasmic side of the membrane; that stretch reads YCSEIFNNMERAKGSA. A helical membrane pass occupies residues 433–453; that stretch reads LSAATNWAFNFALAMFVPSAF. Residues 454–459 lie on the Extracellular side of the membrane; that stretch reads KNISWK. The chain crosses the membrane as a helical span at residues 460–480; it reads TYIIFGVFSVALTIQTFFMFP. At 481–551 the chain is on the cytoplasmic side; sequence ETKGKTLEEI…DRSDSASNSN (71 aa).

Belongs to the major facilitator superfamily. Sugar transporter (TC 2.A.1.1) family.

It is found in the membrane. Functionally, high-affinity glucose transporter. This chain is High-affinity glucose transporter (HGT1), found in Kluyveromyces lactis (strain ATCC 8585 / CBS 2359 / DSM 70799 / NBRC 1267 / NRRL Y-1140 / WM37) (Yeast).